Consider the following 681-residue polypeptide: Sodium-dependent phosphate transporter 1 (681 aa).

Helical transmembrane passes span 25 to 45 (YLWM…SVGA), 66 to 86 (ACIL…AKVS), 106 to 126 (LMAG…VASF), 162 to 182 (IVMS…ILFF), 207 to 227 (ACTV…LLGF), and 234 to 254 (GTIL…WFFV). Phosphoserine occurs at positions 269 and 273. Positions 269–296 (SPSESPLMEKKNSLKEDHEETKLSVSDI) are disordered. Residues 275 to 290 (LMEKKNSLKEDHEETK) are compositionally biased toward basic and acidic residues. The next 4 membrane-spanning stretches (helical) occupy residues 515–535 (VSLL…FAHG), 562–582 (VATP…GLWV), 604–624 (FSIE…GLPI), and 654–674 (IFMA…AIMA). The tract at residues 554-562 (DTGDVSSKV) is a.

It belongs to the inorganic phosphate transporter (PiT) (TC 2.A.20) family.

It localises to the cell membrane. It carries out the reaction 2 Na(+)(out) + phosphate(out) = 2 Na(+)(in) + phosphate(in). Its function is as follows. Sodium-phosphate symporter which preferentially transports the monovalent form of phosphate with a stoichiometry of two sodium ions per phosphate ion. May play a role in extracellular matrix and cartilage calcification as well as in vascular calcification. Essential for cell proliferation but this function is independent of its phosphate transporter activity. The chain is Sodium-dependent phosphate transporter 1 (Slc20a1) from Felis catus (Cat).